Here is a 790-residue protein sequence, read N- to C-terminus: LPS-assembly protein LptD (790 aa).

An N-terminal signal peptide occupies residues 1–20; the sequence is MRMLRWLILSAFSVAGAVQA.

Belongs to the LptD family. In terms of assembly, component of the lipopolysaccharide transport and assembly complex. Interacts with LptE and LptA.

It localises to the cell outer membrane. In terms of biological role, together with LptE, is involved in the assembly of lipopolysaccharide (LPS) at the surface of the outer membrane. This is LPS-assembly protein LptD from Bordetella parapertussis (strain 12822 / ATCC BAA-587 / NCTC 13253).